The primary structure comprises 570 residues: Sulfite reductase [NADPH] hemoprotein beta-component (570 aa).

Residues C434, C440, C479, and C483 each contribute to the [4Fe-4S] cluster site. C483 serves as a coordination point for siroheme.

The protein belongs to the nitrite and sulfite reductase 4Fe-4S domain family. In terms of assembly, alpha(8)-beta(8). The alpha component is a flavoprotein, the beta component is a hemoprotein. Requires siroheme as cofactor. The cofactor is [4Fe-4S] cluster.

It catalyses the reaction hydrogen sulfide + 3 NADP(+) + 3 H2O = sulfite + 3 NADPH + 4 H(+). It functions in the pathway sulfur metabolism; hydrogen sulfide biosynthesis; hydrogen sulfide from sulfite (NADPH route): step 1/1. Functionally, component of the sulfite reductase complex that catalyzes the 6-electron reduction of sulfite to sulfide. This is one of several activities required for the biosynthesis of L-cysteine from sulfate. This Escherichia coli (strain K12) protein is Sulfite reductase [NADPH] hemoprotein beta-component (cysI).